Consider the following 453-residue polypeptide: Tryptophan dimethylallyltransferase cnsF (453 aa).

L-tryptophan contacts are provided by residues 84–85 (IL) and glutamate 93. 3 residues coordinate substrate: arginine 104, lysine 190, and tyrosine 192. L-tryptophan contacts are provided by tyrosine 194 and arginine 248. Residues arginine 261, lysine 263, tyrosine 265, glutamine 347, and tyrosine 349 each coordinate substrate.

Belongs to the tryptophan dimethylallyltransferase family. Homodimer.

The catalysed reaction is L-tryptophan + dimethylallyl diphosphate = 4-(3-methylbut-2-enyl)-L-tryptophan + diphosphate. It participates in alkaloid biosynthesis. Functionally, tryptophan dimethylallyltransferase; part of the gene cluster that mediates the biosynthesis of communesins, a prominent class of indole alkaloids with great potential as pharmaceuticals. Communesins are biosynthesized by the coupling of tryptamine and aurantioclavine, two building blocks derived from L-tryptophan. The L-tryptophan decarboxylase cnsB converts L-tryptophan to tryptamine, whereas the tryptophan dimethylallyltransferase cnsF converts L-tryptophan to 4-dimethylallyl tryptophan which is further transformed to aurantioclavine by the aurantioclavine synthase cnsA, probably aided by the catalase cnsD. The cytochrome P450 monooxygenase cnsC catalyzes the heterodimeric coupling between the two different indole moieties, tryptamine and aurantioclavine, to construct vicinal quaternary stereocenters and yield the heptacyclic communesin scaffold. The O-methyltransferase cnsE then methylates the communesin scaffold to produce communesin K, the simplest characterized communesin that contains the heptacyclic core. The dioxygenase cnsJ converts communesin K into communesin I. Acylation to introduce the hexadienyl group at position N16 of communesin I by the acyltransferase cnsK leads to the production of communesin B. The hexadienyl group is produced by the highly reducing polyketide synthase cnsI, before being hydrolytically removed from cnsI by the serine hydrolase cnsH, converted into hexadienyl-CoA by the CoA ligase cnsG, and then transferred to communesin I by cnsK. Surprisingly, cnsK may also be a promiscuous acyltransferase that can tolerate a range of acyl groups, including acetyl-, propionyl-, and butyryl-CoA, which lead to communesins A, G and H respectively. The roles of the alpha-ketoglutarate-dependent dioxygenases cnsM and cnsP have still to be determined. The polypeptide is Tryptophan dimethylallyltransferase cnsF (Penicillium expansum (Blue mold rot fungus)).